The chain runs to 242 residues: Tryptophan synthase alpha chain (242 aa).

Catalysis depends on proton acceptor residues Glu-31 and Asp-42.

The protein belongs to the TrpA family. Tetramer of two alpha and two beta chains.

It catalyses the reaction (1S,2R)-1-C-(indol-3-yl)glycerol 3-phosphate + L-serine = D-glyceraldehyde 3-phosphate + L-tryptophan + H2O. The protein operates within amino-acid biosynthesis; L-tryptophan biosynthesis; L-tryptophan from chorismate: step 5/5. Its function is as follows. The alpha subunit is responsible for the aldol cleavage of indoleglycerol phosphate to indole and glyceraldehyde 3-phosphate. The sequence is that of Tryptophan synthase alpha chain from Staphylococcus aureus (strain Mu3 / ATCC 700698).